The primary structure comprises 310 residues: Methionyl-tRNA formyltransferase (310 aa).

Residue 110 to 113 (SLLP) participates in (6S)-5,6,7,8-tetrahydrofolate binding.

Belongs to the Fmt family.

The enzyme catalyses L-methionyl-tRNA(fMet) + (6R)-10-formyltetrahydrofolate = N-formyl-L-methionyl-tRNA(fMet) + (6S)-5,6,7,8-tetrahydrofolate + H(+). In terms of biological role, attaches a formyl group to the free amino group of methionyl-tRNA(fMet). The formyl group appears to play a dual role in the initiator identity of N-formylmethionyl-tRNA by promoting its recognition by IF2 and preventing the misappropriation of this tRNA by the elongation apparatus. The sequence is that of Methionyl-tRNA formyltransferase from Streptomyces avermitilis (strain ATCC 31267 / DSM 46492 / JCM 5070 / NBRC 14893 / NCIMB 12804 / NRRL 8165 / MA-4680).